The primary structure comprises 177 residues: Large ribosomal subunit protein uL6 (177 aa).

The protein belongs to the universal ribosomal protein uL6 family. In terms of assembly, part of the 50S ribosomal subunit.

Functionally, this protein binds to the 23S rRNA, and is important in its secondary structure. It is located near the subunit interface in the base of the L7/L12 stalk, and near the tRNA binding site of the peptidyltransferase center. The sequence is that of Large ribosomal subunit protein uL6 from Vibrio parahaemolyticus serotype O3:K6 (strain RIMD 2210633).